A 329-amino-acid chain; its full sequence is Cytosolic arginine sensor for mTORC1 subunit 2 (329 aa).

ACT domains follow at residues 72–139 (ADAT…MHTL) and 262–322 (ELWK…NALQ).

This sequence belongs to the GATS family. In terms of assembly, may form homodimers and heterodimers.

The protein localises to the cytoplasm. Its subcellular location is the cytosol. Functionally, functions as a negative regulator of the TORC1 signaling pathway. In Xenopus tropicalis (Western clawed frog), this protein is Cytosolic arginine sensor for mTORC1 subunit 2.